A 605-amino-acid chain; its full sequence is Isocitrate dehydrogenase kinase/phosphatase (605 aa).

ATP is bound by residues 353-359 (APGFKGT) and K374. Residue D413 is part of the active site.

This sequence belongs to the AceK family.

The protein resides in the cytoplasm. It carries out the reaction L-seryl-[isocitrate dehydrogenase] + ATP = O-phospho-L-seryl-[isocitrate dehydrogenase] + ADP + H(+). In terms of biological role, bifunctional enzyme which can phosphorylate or dephosphorylate isocitrate dehydrogenase (IDH) on a specific serine residue. This is a regulatory mechanism which enables bacteria to bypass the Krebs cycle via the glyoxylate shunt in response to the source of carbon. When bacteria are grown on glucose, IDH is fully active and unphosphorylated, but when grown on acetate or ethanol, the activity of IDH declines drastically concomitant with its phosphorylation. The protein is Isocitrate dehydrogenase kinase/phosphatase of Rhodopseudomonas palustris (strain HaA2).